The following is a 444-amino-acid chain: Elongation factor 1-alpha (444 aa).

Residues 15–238 enclose the tr-type G domain; it reads KPHINLAVVG…DSFQPPQRPV (224 aa). Positions 24–31 are G1; the sequence is GHVDNGKS. 24-31 contacts GTP; that stretch reads GHVDNGKS. Ser31 provides a ligand contact to Mg(2+). The segment at 80–84 is G2; it reads GVTIE. Residues 101–104 are G3; the sequence is DLPG. GTP contacts are provided by residues 101–105 and 163–166; these read DLPGH and NKMD. Positions 163 to 166 are G4; the sequence is NKMD. The tract at residues 202–204 is G5; that stretch reads SAI.

The protein belongs to the TRAFAC class translation factor GTPase superfamily. Classic translation factor GTPase family. EF-Tu/EF-1A subfamily.

The protein localises to the cytoplasm. It carries out the reaction GTP + H2O = GDP + phosphate + H(+). In terms of biological role, GTP hydrolase that promotes the GTP-dependent binding of aminoacyl-tRNA to the A-site of ribosomes during protein biosynthesis. The sequence is that of Elongation factor 1-alpha from Pyrobaculum aerophilum (strain ATCC 51768 / DSM 7523 / JCM 9630 / CIP 104966 / NBRC 100827 / IM2).